The sequence spans 274 residues: Thiazole synthase (274 aa).

Catalysis depends on Lys-111, which acts as the Schiff-base intermediate with DXP. Residues Gly-172, 198–199, and 220–221 contribute to the 1-deoxy-D-xylulose 5-phosphate site; these read AG and NS. The interval 251–274 is disordered; sequence RLPERAAASPSSPTTGIIAEAKTK.

This sequence belongs to the ThiG family. In terms of assembly, homotetramer. Forms heterodimers with either ThiH or ThiS.

It is found in the cytoplasm. The catalysed reaction is [ThiS sulfur-carrier protein]-C-terminal-Gly-aminoethanethioate + 2-iminoacetate + 1-deoxy-D-xylulose 5-phosphate = [ThiS sulfur-carrier protein]-C-terminal Gly-Gly + 2-[(2R,5Z)-2-carboxy-4-methylthiazol-5(2H)-ylidene]ethyl phosphate + 2 H2O + H(+). The protein operates within cofactor biosynthesis; thiamine diphosphate biosynthesis. Catalyzes the rearrangement of 1-deoxy-D-xylulose 5-phosphate (DXP) to produce the thiazole phosphate moiety of thiamine. Sulfur is provided by the thiocarboxylate moiety of the carrier protein ThiS. In vitro, sulfur can be provided by H(2)S. This chain is Thiazole synthase, found in Prochlorococcus marinus (strain MIT 9313).